Here is a 100-residue protein sequence, read N- to C-terminus: Small ribosomal subunit protein uS14 (100 aa).

This sequence belongs to the universal ribosomal protein uS14 family. Part of the 30S ribosomal subunit. Contacts proteins S3 and S10.

Its function is as follows. Binds 16S rRNA, required for the assembly of 30S particles and may also be responsible for determining the conformation of the 16S rRNA at the A site. This chain is Small ribosomal subunit protein uS14, found in Prochlorococcus marinus (strain MIT 9313).